A 459-amino-acid polypeptide reads, in one-letter code: Putrescine aminotransferase (459 aa).

Pyridoxal 5'-phosphate-binding positions include 150–151 (GT) and Q274. Residue K300 is modified to N6-(pyridoxal phosphate)lysine. T332 is a pyridoxal 5'-phosphate binding site.

This sequence belongs to the class-III pyridoxal-phosphate-dependent aminotransferase family. Putrescine aminotransferase subfamily. It depends on pyridoxal 5'-phosphate as a cofactor.

It catalyses the reaction an alkane-alpha,omega-diamine + 2-oxoglutarate = an omega-aminoaldehyde + L-glutamate. The enzyme catalyses putrescine + 2-oxoglutarate = 1-pyrroline + L-glutamate + H2O. The catalysed reaction is cadaverine + 2-oxoglutarate = 5-aminopentanal + L-glutamate. Its pathway is amine and polyamine degradation; putrescine degradation; 4-aminobutanal from putrescine (transaminase route): step 1/1. Catalyzes the aminotransferase reaction from putrescine to 2-oxoglutarate, leading to glutamate and 4-aminobutanal, which spontaneously cyclizes to form 1-pyrroline. This is the first step in one of two pathways for putrescine degradation, where putrescine is converted into 4-aminobutanoate (gamma-aminobutyrate or GABA) via 4-aminobutanal. Also functions as a cadaverine transaminase in a a L-lysine degradation pathway to succinate that proceeds via cadaverine, glutarate and L-2-hydroxyglutarate. In Escherichia coli (strain SMS-3-5 / SECEC), this protein is Putrescine aminotransferase.